We begin with the raw amino-acid sequence, 151 residues long: MHALQAKILDPRLGSEFPLPAYATPGSAGLDLRALLKEDTILEPGQTVLIPTGLSIYIGDPGLAAVILPRSGLGHKHGIVLGNLVGLIDSDYQGELMVSCWNRGNTPFTIAVGERIAQLVLVPVVQAHFEIVEAFDESQRGAGGFGHSGSH.

Substrate is bound by residues 70–72 (RSG), Asn83, 87–89 (LID), and Met97.

This sequence belongs to the dUTPase family. Requires Mg(2+) as cofactor.

The enzyme catalyses dUTP + H2O = dUMP + diphosphate + H(+). The protein operates within pyrimidine metabolism; dUMP biosynthesis; dUMP from dCTP (dUTP route): step 2/2. In terms of biological role, this enzyme is involved in nucleotide metabolism: it produces dUMP, the immediate precursor of thymidine nucleotides and it decreases the intracellular concentration of dUTP so that uracil cannot be incorporated into DNA. The chain is Deoxyuridine 5'-triphosphate nucleotidohydrolase from Pseudomonas putida (strain ATCC 47054 / DSM 6125 / CFBP 8728 / NCIMB 11950 / KT2440).